Reading from the N-terminus, the 391-residue chain is Alkanesulfonate monooxygenase (391 aa).

This sequence belongs to the SsuD family.

It catalyses the reaction an alkanesulfonate + FMNH2 + O2 = an aldehyde + FMN + sulfite + H2O + 2 H(+). Its function is as follows. Catalyzes the desulfonation of aliphatic sulfonates. The polypeptide is Alkanesulfonate monooxygenase (Methylorubrum extorquens (strain CM4 / NCIMB 13688) (Methylobacterium extorquens)).